Consider the following 604-residue polypeptide: MHRYRTHTCGAIRPSDVGQTVRLSGWCHRIRDHGGVLFIDLRDHYGLTQCVIDSDSKAFKAAETARSEWVIRIDGRVRTRPAGTENAELPTGSVEVYIDDLEVLGPAGELPLPVFGDQEYPEETRLKYRFLDLRREKLHANIMKRGAIVDSLRRRMREGGFFEFQTPILTASSPEGARDYLVPSRVHPGKFYALPQAPQQFKQLTMIAGFDRYFQIAPCFRDEDARADRSPGEFYQLDIEMSFVTQEDVFQAVEPVLRGVFEEFAGGKRVTKEFPRITYADAMLKYGVDKPDLRNPLIIADVTDEFADDAVEFKAFKGVIKSGGVVRAIPATGAAGQPRSFFDKLNDWARSEGAPGLGYIVFEEEGGALTGKGPIAKFIPAAIQARIAEKAGAKAGDAVFFAAGTEAKAAGLAGKARIRIGDELKLSDTDQFAFCWVVDFPMYEWNEEDKKIDFSHNPFSMPNFDRDEFLALGEADSEKILGIKAFQYDIVCNGIELSSGAIRNHRPDVMEKAFAIAGYGRDVLEEKFGGMLNALRLGAPPHGGIAPGVDRIVMLLCEEPNIREVVLFPMNQRAEDLMMGAPAEATPKQLRELHIRLNLPEKKA.

Glu175 is a binding site for L-aspartate. Residues 199–202 (QQFK) form an aspartate region. L-aspartate contacts are provided by Arg221 and His456. Position 221 to 223 (221 to 223 (RDE)) interacts with ATP. Residue Glu496 participates in ATP binding. Arg503 contacts L-aspartate. 548-551 (GVDR) is a binding site for ATP.

The protein belongs to the class-II aminoacyl-tRNA synthetase family. Type 1 subfamily. As to quaternary structure, homodimer.

The protein localises to the cytoplasm. The enzyme catalyses tRNA(Asx) + L-aspartate + ATP = L-aspartyl-tRNA(Asx) + AMP + diphosphate. Its function is as follows. Aspartyl-tRNA synthetase with relaxed tRNA specificity since it is able to aspartylate not only its cognate tRNA(Asp) but also tRNA(Asn). Reaction proceeds in two steps: L-aspartate is first activated by ATP to form Asp-AMP and then transferred to the acceptor end of tRNA(Asp/Asn). This chain is Aspartate--tRNA(Asp/Asn) ligase, found in Methylorubrum extorquens (strain CM4 / NCIMB 13688) (Methylobacterium extorquens).